Consider the following 231-residue polypeptide: Large ribosomal subunit protein uL1 (231 aa).

Belongs to the universal ribosomal protein uL1 family. Part of the 50S ribosomal subunit.

Its function is as follows. Binds directly to 23S rRNA. The L1 stalk is quite mobile in the ribosome, and is involved in E site tRNA release. Protein L1 is also a translational repressor protein, it controls the translation of the L11 operon by binding to its mRNA. The polypeptide is Large ribosomal subunit protein uL1 (Lactobacillus delbrueckii subsp. bulgaricus (strain ATCC 11842 / DSM 20081 / BCRC 10696 / JCM 1002 / NBRC 13953 / NCIMB 11778 / NCTC 12712 / WDCM 00102 / Lb 14)).